A 428-amino-acid polypeptide reads, in one-letter code: GTPase Obg (428 aa).

One can recognise an Obg domain in the interval 1–158 (MFIDTAKIFV…RWVALELKLL (158 aa)). Positions 159–331 (ADVGLLGFPN…VIKEAARMLK (173 aa)) constitute an OBG-type G domain. Residues 165–172 (GFPNVGKS), 190–194 (FTTLK), 212–215 (DVPG), 282–285 (NKCD), and 312–314 (SAA) contribute to the GTP site. 2 residues coordinate Mg(2+): S172 and T192. The 84-residue stretch at 345–428 (RFIPEDKKFT…LNDFEFEYLL (84 aa)) folds into the OCT domain.

It belongs to the TRAFAC class OBG-HflX-like GTPase superfamily. OBG GTPase family. As to quaternary structure, monomer. Mg(2+) serves as cofactor.

The protein localises to the cytoplasm. An essential GTPase which binds GTP, GDP and possibly (p)ppGpp with moderate affinity, with high nucleotide exchange rates and a fairly low GTP hydrolysis rate. Plays a role in control of the cell cycle, stress response, ribosome biogenesis and in those bacteria that undergo differentiation, in morphogenesis control. The sequence is that of GTPase Obg from Clostridium perfringens (strain ATCC 13124 / DSM 756 / JCM 1290 / NCIMB 6125 / NCTC 8237 / Type A).